A 215-amino-acid polypeptide reads, in one-letter code: LysM and putative peptidoglycan-binding domain-containing protein 2 (215 aa).

A disordered region spans residues 1-40 (MADSSPALSLREGGPRAPRPSAPSPPPRSRSGSESEEAEL). Ala-2 carries the post-translational modification N-acetylalanine. Ser-5, Ser-24, Ser-33, and Ser-57 each carry phosphoserine. A compositionally biased stretch (pro residues) spans 17 to 28 (APRPSAPSPPPR). The 45-residue stretch at 71–115 (VEHRVRAGDTLQGIALKYGVTMEQIKRANKLFTNDCIFLKKTLNI) folds into the LysM domain. Disordered stretches follow at residues 132-175 (DSPE…EEVS) and 193-215 (AAKK…LYHS). The segment covering 196-205 (KLKEESRDEE) has biased composition (basic and acidic residues).

The chain is LysM and putative peptidoglycan-binding domain-containing protein 2 (LYSMD2) from Homo sapiens (Human).